A 121-amino-acid chain; its full sequence is Alpha-lactalbumin (121 aa).

The C-type lysozyme domain occupies 1-121 (IDYRKCQASQ…CLEDLDQWRC (121 aa)). 4 disulfides stabilise this stretch: Cys6-Cys121, Cys28-Cys112, Cys61-Cys77, and Cys73-Cys91. N-linked (GlcNAc...) asparagine glycosylation occurs at Asn44. Ca(2+) is bound by residues Lys79, Asp82, Asp84, Asp87, and Asp88.

This sequence belongs to the glycosyl hydrolase 22 family. As to quaternary structure, lactose synthase (LS) is a heterodimer of a catalytic component, beta1,4-galactosyltransferase (beta4Gal-T1) and a regulatory component, alpha-lactalbumin (LA). In terms of tissue distribution, mammary gland specific. Secreted in milk.

It is found in the secreted. Its function is as follows. Regulatory subunit of lactose synthase, changes the substrate specificity of galactosyltransferase in the mammary gland making glucose a good acceptor substrate for this enzyme. This enables LS to synthesize lactose, the major carbohydrate component of milk. In other tissues, galactosyltransferase transfers galactose onto the N-acetylglucosamine of the oligosaccharide chains in glycoproteins. In Notamacropus rufogriseus (Red-necked wallaby), this protein is Alpha-lactalbumin (LALBA).